The sequence spans 904 residues: Structural polyprotein (904 aa).

3 disordered regions span residues 1–27 (ADQE…VETE), 35–54 (VETP…SARS), and 320–348 (NNSN…KIGP). A compositionally biased stretch (polar residues) spans 39 to 53 (NRINTPMAQDTSSAR). Basic and acidic residues predominate over residues 329-343 (VKEKTKNIPKPKTEN).

This sequence belongs to the picornaviruses polyprotein family. Specific enzymatic cleavages in vivo yield mature proteins.

It localises to the virion. Its subcellular location is the host cytoplasm. Its function is as follows. Structural polyprotein: precursor of all the viral capsid proteins. Forms, together with protein VP2 and protein VP3, an icosahedral capsid protecting the viral RNA genome. The icosahedral capsid has a pseudo-T=3 symmetry with a diameter of approximately 300 Angstroms, and is composed of 60 copies of each capsid proteins. In terms of biological role, forms, together with protein VP1 and protein VP3, an icosahedral capsid protecting the viral RNA genome. The icosahedral capsid has a pseudo-T=3 symmetry with a diameter of approximately 300 Angstroms, and is composed of 60 copies of each capsid proteins. Functionally, forms, together with protein VP1 and protein VP2, an icosahedral capsid protecting the viral RNA genome. The icosahedral capsid has a pseudo-T=3 symmetry with a diameter of approximately 300 Angstroms, and is composed of 60 copies of each capsid proteins. The polypeptide is Structural polyprotein (Apis mellifera (Honeybee)).